Consider the following 59-residue polypeptide: MCVLMEDSSMSNGIDVDKGFAIAFVVLVFVFLIVMVFRCVKLVKNPYEVSSTTADLPLN.

Residues 20–40 (FAIAFVVLVFVFLIVMVFRCV) traverse the membrane as a helical segment.

The protein localises to the membrane. This chain is Cortexin domain containing 2, found in Mus musculus (Mouse).